A 559-amino-acid polypeptide reads, in one-letter code: Potassium-transporting ATPase potassium-binding subunit (559 aa).

12 helical membrane passes run 7-27, 63-83, 132-152, 170-190, 253-273, 283-303, 327-347, 356-376, 379-399, 416-436, 484-504, and 524-544; these read LLIA…GSGL, LLAL…LLFW, GLTV…FALI, LVRI…LFFI, MVQM…FGEA, LLWA…WAEV, FGVL…CGAV, ALGG…FGGV, GLYG…LMIG, MTAL…ALAM, LLAF…MAIA, and GALF…LTFI.

It belongs to the KdpA family. In terms of assembly, the system is composed of three essential subunits: KdpA, KdpB and KdpC.

The protein localises to the cell inner membrane. Part of the high-affinity ATP-driven potassium transport (or Kdp) system, which catalyzes the hydrolysis of ATP coupled with the electrogenic transport of potassium into the cytoplasm. This subunit binds the periplasmic potassium ions and delivers the ions to the membrane domain of KdpB through an intramembrane tunnel. This chain is Potassium-transporting ATPase potassium-binding subunit, found in Salmonella arizonae (strain ATCC BAA-731 / CDC346-86 / RSK2980).